We begin with the raw amino-acid sequence, 391 residues long: Digeranylgeranylglycerophospholipid reductase (391 aa).

FAD is bound by residues Gly13, Glu32, Cys43, Ala44, Gly46, Arg97, Ala121, Asp277, Gly289, and Ile290.

Belongs to the geranylgeranyl reductase family. DGGGPL reductase subfamily. FAD serves as cofactor.

It catalyses the reaction a 2,3-bis-O-phytanyl-sn-glycerol 1-phospholipid + 8 oxidized 2[4Fe-4S]-[ferredoxin] = a 2,3-bis-O-(geranylgeranyl)-sn-glycerol 1-phospholipid + 8 reduced 2[4Fe-4S]-[ferredoxin] + 16 H(+). The catalysed reaction is 2,3-bis-O-(phytanyl)-sn-glycerol 1-phosphate + 8 oxidized 2[4Fe-4S]-[ferredoxin] = 2,3-bis-O-(geranylgeranyl)-sn-glycerol 1-phosphate + 8 reduced 2[4Fe-4S]-[ferredoxin] + 16 H(+). It carries out the reaction a 2,3-bis-O-phytanyl-sn-glycerol 1-phospholipid + 8 A = a 2,3-bis-O-(geranylgeranyl)-sn-glycerol 1-phospholipid + 8 AH2. The enzyme catalyses CDP-2,3-bis-O-(geranylgeranyl)-sn-glycerol + 8 AH2 = CDP-2,3-bis-O-(phytanyl)-sn-glycerol + 8 A. It catalyses the reaction archaetidylserine + 8 AH2 = 2,3-bis-O-phytanyl-sn-glycero-3-phospho-L-serine + 8 A. It participates in membrane lipid metabolism; glycerophospholipid metabolism. Its function is as follows. Is involved in the reduction of 2,3-digeranylgeranylglycerophospholipids (unsaturated archaeols) into 2,3-diphytanylglycerophospholipids (saturated archaeols) in the biosynthesis of archaeal membrane lipids. Catalyzes the formation of archaetidic acid (2,3-di-O-phytanyl-sn-glyceryl phosphate) from 2,3-di-O-geranylgeranylglyceryl phosphate (DGGGP) via the hydrogenation of each double bond of the isoprenoid chains. Is also probably able to reduce double bonds of geranyl groups in CDP-2,3-bis-O-(geranylgeranyl)-sn-glycerol and archaetidylserine, thus acting at various stages in the biosynthesis of archaeal membrane lipids. The protein is Digeranylgeranylglycerophospholipid reductase of Methanothrix thermoacetophila (strain DSM 6194 / JCM 14653 / NBRC 101360 / PT) (Methanosaeta thermophila).